The primary structure comprises 358 residues: WD repeat-containing protein 53 (358 aa).

WD repeat units lie at residues 8–47 (GHSS…GHMQ), 92–131 (VNEE…VTRS), 134–174 (RHSN…PVWI), 195–234 (LNPA…CERE), and 239–278 (GHTL…EKLQ). Positions 288–309 (KKAKRAACPTQGGNSRAPGAED) are disordered.

The protein belongs to the WD repeat WDR53 family.

The polypeptide is WD repeat-containing protein 53 (Wdr53) (Mus musculus (Mouse)).